Here is a 690-residue protein sequence, read N- to C-terminus: Elongation factor G (690 aa).

The region spanning 8 to 283 is the tr-type G domain; the sequence is ERYRNFGIMA…AVVDFMPSPL (276 aa). GTP is bound by residues 17–24, 81–85, and 135–138; these read AHIDAGKT, DTPGH, and NKLD.

The protein belongs to the TRAFAC class translation factor GTPase superfamily. Classic translation factor GTPase family. EF-G/EF-2 subfamily.

The protein resides in the cytoplasm. Its function is as follows. Catalyzes the GTP-dependent ribosomal translocation step during translation elongation. During this step, the ribosome changes from the pre-translocational (PRE) to the post-translocational (POST) state as the newly formed A-site-bound peptidyl-tRNA and P-site-bound deacylated tRNA move to the P and E sites, respectively. Catalyzes the coordinated movement of the two tRNA molecules, the mRNA and conformational changes in the ribosome. The chain is Elongation factor G from Novosphingobium aromaticivorans (strain ATCC 700278 / DSM 12444 / CCUG 56034 / CIP 105152 / NBRC 16084 / F199).